Consider the following 66-residue polypeptide: Large ribosomal subunit protein bL35 (66 aa).

Over residues 1 to 16 (MPKQKTHRASAKRFKR) the composition is skewed to basic residues. The interval 1-20 (MPKQKTHRASAKRFKRTGSG) is disordered.

This sequence belongs to the bacterial ribosomal protein bL35 family.

The chain is Large ribosomal subunit protein bL35 from Streptococcus uberis (strain ATCC BAA-854 / 0140J).